The sequence spans 504 residues: Glycerol kinase (504 aa).

T14 is an ADP binding site. The ATP site is built by T14, T15, and S16. T14 is a binding site for sn-glycerol 3-phosphate. ADP is bound at residue R18. Residues R84, E85, Y136, and D246 each coordinate sn-glycerol 3-phosphate. Glycerol is bound by residues R84, E85, Y136, D246, and Q247. Residues T268 and G311 each contribute to the ADP site. ATP contacts are provided by T268, G311, Q315, and G412. Residues G412 and N416 each contribute to the ADP site.

This sequence belongs to the FGGY kinase family.

The catalysed reaction is glycerol + ATP = sn-glycerol 3-phosphate + ADP + H(+). The protein operates within polyol metabolism; glycerol degradation via glycerol kinase pathway; sn-glycerol 3-phosphate from glycerol: step 1/1. Its activity is regulated as follows. Inhibited by fructose 1,6-bisphosphate (FBP). Its function is as follows. Key enzyme in the regulation of glycerol uptake and metabolism. Catalyzes the phosphorylation of glycerol to yield sn-glycerol 3-phosphate. The chain is Glycerol kinase from Aliivibrio fischeri (strain ATCC 700601 / ES114) (Vibrio fischeri).